Reading from the N-terminus, the 558-residue chain is Factor VII-activating protease (558 aa).

The N-terminal stretch at 1–23 (MFVRMLVFRVLLLIALVGKSVIG) is a signal peptide. EGF-like domains lie at 71–107 (DDDP…SRCQ), 109–146 (AQNK…PDCS), and 148–186 (VLPA…KFCE). Disulfide bonds link C75–C86, C80–C95, C97–C106, C113–C123, C118–C134, C136–C145, C152–C163, C157–C174, C176–C185, C192–C274, C213–C255, C244–C269, C299–C433, C345–C361, C353–C422, C445–C513, C475–C491, and C503–C531. The region spanning 191–274 (DCYVGDGYSY…KWEYCDVTVC (84 aa)) is the Kringle domain. Positions 312 to 553 (IYGGFKSTAG…FLNWIKTTMH (242 aa)) constitute a Peptidase S1 domain. Active-site charge relay system residues include H360 and D409. S507 acts as the Charge relay system in catalysis.

The protein belongs to the peptidase S1 family. Heterodimer; disulfide-linked. Heterodimer of a 50 kDa heavy and a 27 kDa light chain linked by a disulfide bond. Proteolytic cleavage at Gly-23 or Met-27 can give rise to the 50 kDa heavy chain (HC) and cleavage at Arg-311 or Lys-317 can give rise to the 27 kDa light chain (LC). The HC can undergo further proteolytic cleavage giving rise to a 26 kDa fragment. The LC can undergo further proteolytic cleavage at Arg-311 leading to a 17-kDa fragment and at Arg-478 leading to a 8-kDa fragment. As to expression, liver and kidney.

Its subcellular location is the secreted. Its function is as follows. Cleaves the alpha-chain at multiple sites and the beta-chain between 'Lys-53' and 'Lys-54' but not the gamma-chain of fibrinogen and therefore does not initiate the formation of the fibrin clot and does not cause the fibrinolysis directly. It does not cleave (activate) prothrombin and plasminogen but converts the inactive single chain urinary plasminogen activator (pro-urokinase) to the active two chain form. Activates coagulation factor VII. May function as a tumor suppressor negatively regulating cell proliferation and cell migration. This is Factor VII-activating protease from Mus musculus (Mouse).